The sequence spans 90 residues: Putative Fis-like DNA-binding protein (90 aa).

A DNA-binding region (H-T-H motif) is located at residues 66–85; it reads QSRAAALLGIHRATLRKKLK.

This sequence belongs to the transcriptional regulatory Fis family.

The sequence is that of Putative Fis-like DNA-binding protein from Xylella fastidiosa (strain Temecula1 / ATCC 700964).